The primary structure comprises 152 residues: Transcriptional regulator MraZ (152 aa).

2 SpoVT-AbrB domains span residues 5–52 and 81–124; these read VTSI…PLHE and ATEC…QDKQ.

The protein belongs to the MraZ family. As to quaternary structure, forms oligomers.

Its subcellular location is the cytoplasm. It localises to the nucleoid. The polypeptide is Transcriptional regulator MraZ (Actinobacillus pleuropneumoniae serotype 3 (strain JL03)).